The following is a 161-amino-acid chain: Nucleotide-binding protein PFL_4775 (161 aa).

Belongs to the YajQ family.

Its function is as follows. Nucleotide-binding protein. The polypeptide is Nucleotide-binding protein PFL_4775 (Pseudomonas fluorescens (strain ATCC BAA-477 / NRRL B-23932 / Pf-5)).